Consider the following 283-residue polypeptide: Mitochondrial outer membrane protein porin (283 aa).

It belongs to the eukaryotic mitochondrial porin family.

It localises to the mitochondrion outer membrane. Forms a channel through the cell membrane that allows diffusion of small hydrophilic molecules. The channel adopts an open conformation at low or zero membrane potential and a closed conformation at potentials above 30-40 mV. The open state has a weak anion selectivity whereas the closed state is cation-selective. The protein is Mitochondrial outer membrane protein porin of Neurospora crassa (strain ATCC 24698 / 74-OR23-1A / CBS 708.71 / DSM 1257 / FGSC 987).